A 1182-amino-acid chain; its full sequence is Lysine-specific demethylase hairless (1182 aa).

Disordered regions lie at residues 227-257 (LGLA…GAGR), 302-380 (YQLG…KKTW), 411-443 (AGSP…ARAW), and 507-546 (TGHS…ASLN). The span at 307–321 (PATPRCPSPGPPTPP) shows a compositional bias: pro residues. An LXXLL motif 1 motif is present at residues 561 to 565 (LCRLL). The segment at 595–620 (CSRCHHGLFNTHWRCSHCSHRLCVAC) adopts a C6-type zinc-finger fold. The disordered stretch occupies residues 697–746 (GDGGQQKEPTEKTPPTPQPSCNGDSNRTKDIKEETPDSTESPAEDGAGRS). Residues 722 to 731 (NRTKDIKEET) are compositionally biased toward basic and acidic residues. The LXXLL motif 2 signature appears at 753–757 (LCELL). One can recognise a JmjC domain in the interval 939 to 1150 (DASRVQNLAS…LSAQLYHQGA (212 aa)). 3 residues coordinate Fe cation: cysteine 1000, glutamate 1002, and histidine 1118.

Requires Fe(2+) as cofactor. As to expression, expressed predominantly in brain, hair follicles and interfollicular epidermis. No expression in dermis.

It localises to the nucleus. The enzyme catalyses N(6),N(6)-dimethyl-L-lysyl(9)-[histone H3] + 2 2-oxoglutarate + 2 O2 = L-lysyl(9)-[histone H3] + 2 formaldehyde + 2 succinate + 2 CO2. Histone demethylase that specifically demethylates both mono- and dimethylated 'Lys-9' of histone H3. May act as a transcription regulator controlling hair biology (via targeting of collagens), neural activity, and cell cycle. The polypeptide is Lysine-specific demethylase hairless (Hr) (Mus musculus (Mouse)).